The following is a 182-amino-acid chain: Ribulose bisphosphate carboxylase small subunit, chloroplastic (182 aa).

The N-terminal 58 residues, 1–58 (MASSMISSATVATVSRATPAQATMVAPFTGLKSTAAFPATRKSNNDITSLASNGGRVQ), are a transit peptide targeting the chloroplast.

This sequence belongs to the RuBisCO small chain family. In terms of assembly, heterohexadecamer of 8 large and 8 small subunits.

It is found in the plastid. Its subcellular location is the chloroplast. RuBisCO catalyzes two reactions: the carboxylation of D-ribulose 1,5-bisphosphate, the primary event in carbon dioxide fixation, as well as the oxidative fragmentation of the pentose substrate. Both reactions occur simultaneously and in competition at the same active site. Although the small subunit is not catalytic it is essential for maximal activity. This chain is Ribulose bisphosphate carboxylase small subunit, chloroplastic, found in Fagus crenata (Japanese beech).